The sequence spans 583 residues: ATP-dependent lipid A-core flippase (583 aa).

7 helical membrane passes run leucine 18–isoleucine 38, isoleucine 65–phenylalanine 85, leucine 105–methionine 127, glycine 143–phenylalanine 163, tryptophan 167–valine 187, valine 252–alanine 272, and valine 277–methionine 297. The ABC transmembrane type-1 domain occupies isoleucine 30–arginine 312. One can recognise an ABC transporter domain in the interval isoleucine 344–phenylalanine 580. Glycine 378–serine 385 provides a ligand contact to ATP.

The protein belongs to the ABC transporter superfamily. Lipid exporter (TC 3.A.1.106) family. In terms of assembly, homodimer.

It is found in the cell inner membrane. It catalyses the reaction ATP + H2O + lipid A-core oligosaccharideSide 1 = ADP + phosphate + lipid A-core oligosaccharideSide 2.. Functionally, involved in lipopolysaccharide (LPS) biosynthesis. Translocates lipid A-core from the inner to the outer leaflet of the inner membrane. Transmembrane domains (TMD) form a pore in the inner membrane and the ATP-binding domain (NBD) is responsible for energy generation. This Blochmanniella floridana protein is ATP-dependent lipid A-core flippase.